The primary structure comprises 426 residues: Phosphomethylpyrimidine synthase (426 aa).

Residues Asn65, Met94, Tyr123, His162, 184 to 186 (SRG), 225 to 228 (DGMR), and Glu264 each bind substrate. Position 268 (His268) interacts with Zn(2+). Tyr291 lines the substrate pocket. Residue His332 coordinates Zn(2+). Positions 408, 411, and 415 each coordinate [4Fe-4S] cluster.

Belongs to the ThiC family. Requires [4Fe-4S] cluster as cofactor.

It catalyses the reaction 5-amino-1-(5-phospho-beta-D-ribosyl)imidazole + S-adenosyl-L-methionine = 4-amino-2-methyl-5-(phosphooxymethyl)pyrimidine + CO + 5'-deoxyadenosine + formate + L-methionine + 3 H(+). It functions in the pathway cofactor biosynthesis; thiamine diphosphate biosynthesis. Functionally, catalyzes the synthesis of the hydroxymethylpyrimidine phosphate (HMP-P) moiety of thiamine from aminoimidazole ribotide (AIR) in a radical S-adenosyl-L-methionine (SAM)-dependent reaction. The sequence is that of Phosphomethylpyrimidine synthase from Methanococcus maripaludis (strain C7 / ATCC BAA-1331).